The chain runs to 161 residues: Kininogen-2 (161 aa).

Residues 1 to 23 (MRLWFCLSFFVVLCLEHFPGTLA) form the signal peptide. A disulfide bridge connects residues Cys-150 and Cys-156. Val-160 is subject to Valine amide.

The protein belongs to the bradykinin-related peptide family. In terms of tissue distribution, expressed by the skin glands.

The protein localises to the secreted. Inhibits ACE with a Ki of 1.6 uM, and targets B2 bradykinin receptor (BDKRB2). Provokes contraction of smooth muscle preparation (ileum). In vivo, induces an early hyperalgesic effects in living rats after intraplantar injection. Functionally, inhibits the bradykinin-induced in vitro relaxation of rat arterial smooth muscle and constriction of intestinal smooth muscle. May target bradykinin receptors (BDKRB). This chain is Kininogen-2, found in Bombina orientalis (Oriental fire-bellied toad).